The primary structure comprises 214 residues: MATTRKPRGGAGGATQPALDFDAPGEIVCGVDEAGRGPLAGPVVAAAVVLDPARPIVGLDDSKALSAKKRERLFDEIVVHALAYSVASASVEEIDSLNILHATMLAMKRAVEGLSVLPTLAKIDGNRCPMLAIRSEAIVGGDALVPSISAASILAKVTRDRMLVELHQQFPMYGFDAHAGYGTPQHLAALREHGPCEHHRRSFAPVREAFDLIR.

Positions 26–214 (EIVCGVDEAG…PVREAFDLIR (189 aa)) constitute an RNase H type-2 domain. A divalent metal cation is bound by residues aspartate 32, glutamate 33, and aspartate 124.

Belongs to the RNase HII family. Mn(2+) is required as a cofactor. The cofactor is Mg(2+).

It is found in the cytoplasm. It catalyses the reaction Endonucleolytic cleavage to 5'-phosphomonoester.. In terms of biological role, endonuclease that specifically degrades the RNA of RNA-DNA hybrids. The sequence is that of Ribonuclease HII from Burkholderia pseudomallei (strain 668).